A 106-amino-acid chain; its full sequence is Thiosulfate sulfurtransferase GlpE (106 aa).

Positions 17–105 constitute a Rhodanese domain; that stretch reads QLPSVCLADI…WRHVYPYTAT (89 aa). Cys65 acts as the Cysteine persulfide intermediate in catalysis.

Belongs to the GlpE family.

It is found in the cytoplasm. The enzyme catalyses thiosulfate + hydrogen cyanide = thiocyanate + sulfite + 2 H(+). It carries out the reaction thiosulfate + [thioredoxin]-dithiol = [thioredoxin]-disulfide + hydrogen sulfide + sulfite + 2 H(+). Transferase that catalyzes the transfer of sulfur from thiosulfate to thiophilic acceptors such as cyanide or dithiols. May function in a CysM-independent thiosulfate assimilation pathway by catalyzing the conversion of thiosulfate to sulfite, which can then be used for L-cysteine biosynthesis. This Tolumonas auensis (strain DSM 9187 / NBRC 110442 / TA 4) protein is Thiosulfate sulfurtransferase GlpE.